The chain runs to 397 residues: Glutamate 5-kinase (397 aa).

The tract at residues Met-1 to Val-28 is disordered. Lys-40 provides a ligand contact to ATP. Substrate contacts are provided by Ser-80, Asp-168, and Asn-180. ATP contacts are provided by residues Ser-200 to Asp-201 and Ser-243 to Lys-249. A PUA domain is found at His-306–Glu-383.

This sequence belongs to the glutamate 5-kinase family.

The protein localises to the cytoplasm. It carries out the reaction L-glutamate + ATP = L-glutamyl 5-phosphate + ADP. It participates in amino-acid biosynthesis; L-proline biosynthesis; L-glutamate 5-semialdehyde from L-glutamate: step 1/2. In terms of biological role, catalyzes the transfer of a phosphate group to glutamate to form L-glutamate 5-phosphate. The sequence is that of Glutamate 5-kinase from Zymomonas mobilis subsp. mobilis (strain ATCC 31821 / ZM4 / CP4).